The primary structure comprises 475 residues: ADP-ribose glycohydrolase MACROD2 (475 aa).

In terms of domain architecture, Macro spans Gln59 to Phe240. Substrate is bound by residues Gly77 to Ile79, Ala90 to Asn92, and Gly97 to Asp102. A Glycyl lysine isopeptide (Lys-Gly) (interchain with G-Cter in ubiquitin) cross-link involves residue Lys170. Substrate-binding positions include Ile185 to Gly191 and Phe224. Disordered stretches follow at residues Pro241–Ala306 and Gly324–Gln475. 2 stretches are compositionally biased toward basic and acidic residues: residues Ala251–Glu261 and Ser335–Met359. Positions Thr360–Asn375 are enriched in polar residues. Positions Asp376–Ala386 are enriched in basic and acidic residues. 2 stretches are compositionally biased toward polar residues: residues Glu387–Gln402 and Ser440–Ser469.

Belongs to the MacroD-type family. MacroD1/2-like subfamily. Interacts with ADP-ribosylated PARP1. Expressed in the kidney.

The protein localises to the nucleus. The enzyme catalyses 2''-O-acetyl-ADP-D-ribose + H2O = ADP-D-ribose + acetate + H(+). It catalyses the reaction 4-O-(ADP-D-ribosyl)-L-aspartyl-[protein] + H2O = L-aspartyl-[protein] + ADP-D-ribose + H(+). The catalysed reaction is 5-O-(ADP-D-ribosyl)-L-glutamyl-[protein] + H2O = L-glutamyl-[protein] + ADP-D-ribose + H(+). It carries out the reaction alpha-NAD(+) + H2O = ADP-D-ribose + nicotinamide + H(+). Its activity is regulated as follows. Subject to product inhibition by ADP-ribose. Functionally, removes ADP-ribose from aspartate and glutamate residues in proteins bearing a single ADP-ribose moiety. Inactive towards proteins bearing poly-ADP-ribose. Deacetylates O-acetyl-ADP ribose, a signaling molecule generated by the deacetylation of acetylated lysine residues in histones and other proteins. This chain is ADP-ribose glycohydrolase MACROD2, found in Mus musculus (Mouse).